We begin with the raw amino-acid sequence, 91 residues long: Small ribosomal subunit protein bS18 (91 aa).

Belongs to the bacterial ribosomal protein bS18 family. As to quaternary structure, part of the 30S ribosomal subunit. Forms a tight heterodimer with protein bS6.

In terms of biological role, binds as a heterodimer with protein bS6 to the central domain of the 16S rRNA, where it helps stabilize the platform of the 30S subunit. The protein is Small ribosomal subunit protein bS18 of Burkholderia multivorans (strain ATCC 17616 / 249).